A 1275-amino-acid chain; its full sequence is Rho1 guanine nucleotide exchange factor 3 (1275 aa).

Disordered regions lie at residues 1–42 (MKLS…SFQK), 56–113 (SPPF…NSAA), 131–188 (NNPL…SPYS), and 214–248 (LSPT…VEYL). Residues 7-17 (LFHRSSKDHGG) are compositionally biased toward basic and acidic residues. 3 stretches are compositionally biased toward polar residues: residues 32-42 (PHSSSPPSFQK), 80-113 (ASIN…NSAA), and 142-151 (SPGNKQNTVD). Composition is skewed to low complexity over residues 178-188 (SSVSSHSSPYS) and 214-228 (LSPT…SPIR). At Ser293 the chain carries Phosphoserine. One can recognise a DH domain in the interval 465-657 (ARQNNIHELI…RATCEECDAV (193 aa)). Residues 692 to 855 (EFFFEGIVQR…WVEKINVAKK (164 aa)) form the PH domain. Residues 930-1239 (YGDISCIAQF…KYYPSNSDWL (310 aa)) form the CNH domain.

Its subcellular location is the cytoplasm. Functionally, stimulates the exchange of Rho1 GDP-bound form into GTP-bound form. Regulates, via interaction and activation of Rho1, beta-1,3-glucan biosynthesis and cell wall integrity during septation. Involved in the regulation of contractile ring assembly. The chain is Rho1 guanine nucleotide exchange factor 3 (rgf3) from Schizosaccharomyces pombe (strain 972 / ATCC 24843) (Fission yeast).